The chain runs to 1032 residues: uncharacterized protein (1032 aa).

Topologically, residues 1–17 (MYEEIRMKFTDIFIRRP) are cytoplasmic. Residues 18 to 36 (VLAVSISLLMIILGLQAIS) traverse the membrane as a helical segment. Topologically, residues 37-337 (KLAVREYPKM…TIAINSSIHE (301 aa)) are periplasmic. A helical transmembrane segment spans residues 338-357 (VIKTIGEATLIVLVVILMFI). At 358–363 (GSFRAI) the chain is on the cytoplasmic side. A helical membrane pass occupies residues 364 to 383 (LIPILAIPISLIGVLMLLQS). Residues 384 to 389 (FNFSIN) are Periplasmic-facing. A helical membrane pass occupies residues 390–411 (LMTLLALILAIGLVVDDAIVVL). Topologically, residues 412-438 (ENIDRHIKAGETPFRAAIIGTREIAVP) are cytoplasmic. Residues 439–457 (VISMTIALIAVYSPMALMG) traverse the membrane as a helical segment. Residues 458-470 (GITGTLFKEFALT) lie on the Periplasmic side of the membrane. A helical transmembrane segment spans residues 471-493 (LAGAVFISGVVALTLSPMMSSKL). The Cytoplasmic segment spans residues 494–529 (LKSNAKPTWMEERVEHTLGKVNRVYEYMLDLVMLNR). The chain crosses the membrane as a helical span at residues 530 to 548 (KSMLAFAVVIFSTLPFLFN). Residues 549 to 852 (SLSSELTPNE…ARQLVQEGNA (304 aa)) lie on the Periplasmic side of the membrane. Residues 853–872 (LAVTFALAVIIIFLVLAIQF) form a helical membrane-spanning segment. Residues 873–878 (ESIRDP) lie on the Cytoplasmic side of the membrane. A helical transmembrane segment spans residues 879–898 (MVIMISVPLAVSGALVSLNI). At 899 to 910 (LSFFSIAGTTLN) the chain is on the periplasmic side. Residues 911–932 (IYSQVGLITLVGLITKHGILMC) traverse the membrane as a helical segment. At 933 to 960 (EVAKEEQLNHGKTRIEAITHAAKVRLRP) the chain is on the cytoplasmic side. Residues 961-979 (ILMTTAAMVAGLIPLLYAT) traverse the membrane as a helical segment. Topologically, residues 980–992 (GAGAVSRFSIGIV) are periplasmic. A helical membrane pass occupies residues 993 to 1015 (IVAGLSIGTIFTLFVLPVVYSYV). Residues 1016–1032 (ATEHKPLPVFDENKTTH) lie on the Cytoplasmic side of the membrane.

It belongs to the resistance-nodulation-cell division (RND) (TC 2.A.6) family.

The protein localises to the cell inner membrane. In terms of biological role, could be a drug efflux pump. This is an uncharacterized protein from Haemophilus influenzae (strain ATCC 51907 / DSM 11121 / KW20 / Rd).